A 101-amino-acid polypeptide reads, in one-letter code: Protein Tat (101 aa).

The interaction with human CREBBP stretch occupies residues 1–24 (MEPVDPRLEPWKHPGSQPKTACTN). The interval 1–48 (MEPVDPRLEPWKHPGSQPKTACTNCYCKKCCFHCQVCFITKGLGISYG) is transactivation. Positions 22, 25, and 27 each coordinate Zn(2+). The cysteine-rich stretch occupies residues 22–37 (CTNCYCKKCCFHCQVC). N6-acetyllysine; by host PCAF is present on Lys-28. The Zn(2+) site is built by Cys-30, His-33, Cys-34, and Cys-37. The segment at 38–48 (FITKGLGISYG) is core. Basic residues predominate over residues 48 to 57 (GRKKRRQRRR). A disordered region spans residues 48–101 (GRKKRRQRRRAPPDSEVHQVSLPKQPASQPQGDPTGPKESKKKVERETETDPVH). Positions 49-57 (RKKRRQRRR) match the Nuclear localization signal, RNA-binding (TAR), and protein transduction motif. An interaction with the host capping enzyme RNGTT region spans residues 49–86 (RKKRRQRRRAPPDSEVHQVSLPKQPASQPQGDPTGPKE). N6-acetyllysine; by host EP300 and GCN5L2 occurs at positions 50 and 51. Residues Arg-52 and Arg-53 each carry the asymmetric dimethylarginine; by host PRMT6 modification. Lys-71 participates in a covalent cross-link: Glycyl lysine isopeptide (Lys-Gly) (interchain with G-Cter in ubiquitin). Over residues 83-101 (GPKESKKKVERETETDPVH) the composition is skewed to basic and acidic residues.

Belongs to the lentiviruses Tat family. In terms of assembly, interacts with host CCNT1. Associates with the P-TEFb complex composed at least of Tat, P-TEFb (CDK9 and CCNT1), TAR RNA, RNA Pol II. Recruits the HATs CREBBP, TAF1/TFIID, EP300, PCAF and GCN5L2. Interacts with host KAT5/Tip60; this interaction targets the latter to degradation. Interacts with the host deacetylase SIRT1. Interacts with host capping enzyme RNGTT; this interaction stimulates RNGTT. Binds to host KDR, and to the host integrins ITGAV/ITGB3 and ITGA5/ITGB1. Interacts with host KPNB1/importin beta-1 without previous binding to KPNA1/importin alpha-1. Interacts with EIF2AK2. Interacts with host nucleosome assembly protein NAP1L1; this interaction may be required for the transport of Tat within the nucleus, since the two proteins interact at the nuclear rim. Interacts with host C1QBP/SF2P32; this interaction involves lysine-acetylated Tat. Interacts with the host chemokine receptors CCR2, CCR3 and CXCR4. Interacts with host DPP4/CD26; this interaction may trigger an anti-proliferative effect. Interacts with host LDLR. Interacts with the host extracellular matrix metalloproteinase MMP1. Interacts with host PRMT6; this interaction mediates Tat's methylation. Interacts with, and is ubiquitinated by MDM2/Hdm2. Interacts with host PSMC3 and HTATIP2. Interacts with STAB1; this interaction may overcome SATB1-mediated repression of IL2 and IL2RA (interleukin) in T cells by binding to the same domain than HDAC1. Interacts (when acetylated) with human CDK13, thereby increasing HIV-1 mRNA splicing and promoting the production of the doubly spliced HIV-1 protein Nef. Interacts with host TBP; this interaction modulates the activity of transcriptional pre-initiation complex. Interacts with host RELA. Interacts with host PLSCR1; this interaction negatively regulates Tat transactivation activity by altering its subcellular distribution. Post-translationally, asymmetrical arginine methylation by host PRMT6 seems to diminish the transactivation capacity of Tat and affects the interaction with host CCNT1. Acetylation by EP300, CREBBP, GCN5L2/GCN5 and PCAF regulates the transactivation activity of Tat. EP300-mediated acetylation of Lys-50 promotes dissociation of Tat from the TAR RNA through the competitive binding to PCAF's bromodomain. In addition, the non-acetylated Tat's N-terminus can also interact with PCAF. PCAF-mediated acetylation of Lys-28 enhances Tat's binding to CCNT1. Lys-50 is deacetylated by SIRT1. In terms of processing, polyubiquitination by host MDM2 does not target Tat to degradation, but activates its transactivation function and fosters interaction with CCNT1 and TAR RNA. Post-translationally, phosphorylated by EIF2AK2 on serine and threonine residues adjacent to the basic region important for TAR RNA binding and function. Phosphorylation of Tat by EIF2AK2 is dependent on the prior activation of EIF2AK2 by dsRNA.

The protein localises to the host nucleus. The protein resides in the host nucleolus. It localises to the host cytoplasm. It is found in the secreted. Transcriptional activator that increases RNA Pol II processivity, thereby increasing the level of full-length viral transcripts. Recognizes a hairpin structure at the 5'-LTR of the nascent viral mRNAs referred to as the transactivation responsive RNA element (TAR) and recruits the cyclin T1-CDK9 complex (P-TEFb complex) that will in turn hyperphosphorylate the RNA polymerase II to allow efficient elongation. The CDK9 component of P-TEFb and other Tat-activated kinases hyperphosphorylate the C-terminus of RNA Pol II that becomes stabilized and much more processive. Other factors such as HTATSF1/Tat-SF1, SUPT5H/SPT5, and HTATIP2 are also important for Tat's function. Besides its effect on RNA Pol II processivity, Tat induces chromatin remodeling of proviral genes by recruiting the histone acetyltransferases (HATs) CREBBP, EP300 and PCAF to the chromatin. This also contributes to the increase in proviral transcription rate, especially when the provirus integrates in transcriptionally silent region of the host genome. To ensure maximal activation of the LTR, Tat mediates nuclear translocation of NF-kappa-B by interacting with host RELA. Through its interaction with host TBP, Tat may also modulate transcription initiation. Tat can reactivate a latently infected cell by penetrating in it and transactivating its LTR promoter. In the cytoplasm, Tat is thought to act as a translational activator of HIV-1 mRNAs. In terms of biological role, extracellular circulating Tat can be endocytosed by surrounding uninfected cells via the binding to several surface receptors such as CD26, CXCR4, heparan sulfate proteoglycans (HSPG) or LDLR. Neurons are rarely infected, but they internalize Tat via their LDLR. Through its interaction with nuclear HATs, Tat is potentially able to control the acetylation-dependent cellular gene expression. Modulates the expression of many cellular genes involved in cell survival, proliferation or in coding for cytokines or cytokine receptors. Tat plays a role in T-cell and neurons apoptosis. Tat induced neurotoxicity and apoptosis probably contribute to neuroAIDS. Circulating Tat also acts as a chemokine-like and/or growth factor-like molecule that binds to specific receptors on the surface of the cells, affecting many cellular pathways. In the vascular system, Tat binds to ITGAV/ITGB3 and ITGA5/ITGB1 integrins dimers at the surface of endothelial cells and competes with bFGF for heparin-binding sites, leading to an excess of soluble bFGF. The protein is Protein Tat of Human immunodeficiency virus type 1 group M subtype B (isolate SF162) (HIV-1).